A 151-amino-acid chain; its full sequence is Tetratricopeptide repeat protein 32 (151 aa).

TPR repeat units lie at residues 8–41, 58–91, and 92–125; these read SHAT…CACA, ATAY…QPNF, and EVPY…NPGF.

The protein is Tetratricopeptide repeat protein 32 (TTC32) of Homo sapiens (Human).